Here is a 146-residue protein sequence, read N- to C-terminus: 3-dehydroquinate dehydratase (146 aa).

The active-site Proton acceptor is Y23. Positions 74, 80, and 87 each coordinate substrate. Catalysis depends on H100, which acts as the Proton donor. Residues 101–102 (IS) and R111 each bind substrate.

It belongs to the type-II 3-dehydroquinase family. As to quaternary structure, homododecamer.

The enzyme catalyses 3-dehydroquinate = 3-dehydroshikimate + H2O. It functions in the pathway metabolic intermediate biosynthesis; chorismate biosynthesis; chorismate from D-erythrose 4-phosphate and phosphoenolpyruvate: step 3/7. In terms of biological role, catalyzes a trans-dehydration via an enolate intermediate. In Bacillus cereus (strain ATCC 14579 / DSM 31 / CCUG 7414 / JCM 2152 / NBRC 15305 / NCIMB 9373 / NCTC 2599 / NRRL B-3711), this protein is 3-dehydroquinate dehydratase.